Here is a 162-residue protein sequence, read N- to C-terminus: Phosphopantetheine adenylyltransferase (162 aa).

Position 9 (T9) interacts with substrate. Residues 9–10 (TF) and H17 each bind ATP. K41, L76, and R90 together coordinate substrate. Residues 91–93 (GLR), E101, and 126–132 (HQAIASR) contribute to the ATP site.

It belongs to the bacterial CoaD family. In terms of assembly, homohexamer. It depends on Mg(2+) as a cofactor.

It localises to the cytoplasm. The catalysed reaction is (R)-4'-phosphopantetheine + ATP + H(+) = 3'-dephospho-CoA + diphosphate. Its pathway is cofactor biosynthesis; coenzyme A biosynthesis; CoA from (R)-pantothenate: step 4/5. Reversibly transfers an adenylyl group from ATP to 4'-phosphopantetheine, yielding dephospho-CoA (dPCoA) and pyrophosphate. This Caulobacter sp. (strain K31) protein is Phosphopantetheine adenylyltransferase.